Here is a 503-residue protein sequence, read N- to C-terminus: MIVLFVEPIRFFDTTLRDGEQTPGVSLTPAGKLEIATHLADVGVHVIEAGSAAASVGERESIRAIADAGLAAECCTYVRALPGDIDLAADAGADSVHLVVPVSDLHIAKKLRKTREQVSEMAWSAVEYAKERGLVVELSGEDASRADQDFLAEVFREGVERGADRLCFCDTVGLLTPERAAAIIPPLLFAPLSIHCHDDLGFGLATTVAALRAGATCAHVTVNGLGERAGNTSLEELVMALEVLYGVDTGIATEELYPLSTHVARLTGVPLATNKPIVGEMAFTHESGIHAHGVMRDASTYEPLQPERVGRRRRIVLGKHSGSAAVEAALHDMGYAPSAAQLKEIVDRIKRLGDAGMRITDADIMAIADTVMEIEFTPCIELRQFTIVSGSNAIPTASVTMLVRGEEITGAAVGTGPVDAAIRALQRSVADVGSVRLDEYSVDAITGGTDALVDVSVKLSKDGKTVTSRGARTDIIMASVEAVIAGMNRLLREEHEDRSQDSD.

One can recognise a Pyruvate carboxyltransferase domain in the interval 9 to 257 (IRFFDTTLRD…DTGIATEELY (249 aa)).

The protein belongs to the alpha-IPM synthase/homocitrate synthase family. Homodimer.

It carries out the reaction pyruvate + acetyl-CoA + H2O = (3R)-citramalate + CoA + H(+). It functions in the pathway amino-acid biosynthesis; L-isoleucine biosynthesis; 2-oxobutanoate from pyruvate: step 1/3. Its function is as follows. Catalyzes the condensation of pyruvate and acetyl-coenzyme A to form (R)-citramalate. This chain is Putative (R)-citramalate synthase CimA, found in Methanoculleus marisnigri (strain ATCC 35101 / DSM 1498 / JR1).